The sequence spans 640 residues: uncharacterized protein (640 aa).

Transmembrane regions (helical) follow at residues 8-28 (GGVV…LGMF), 52-72 (LGGF…CYLI), 90-110 (LFVA…FLLA), 136-156 (LWYA…LVVL), 179-199 (VFML…LHAW), 208-228 (PSPV…YGIV), 241-261 (WWGL…VLQA), 277-297 (ENMG…DTGA), 298-318 (YGPA…HAAF), 352-372 (TVFF…AGFV), 391-411 (IVAL…GLSV), 446-466 (AIAA…APMV), 497-517 (IAPG…AVLA), and 619-639 (GSVH…LVVA).

This sequence belongs to the complex I subunit 4 family.

Its subcellular location is the cell membrane. This is an uncharacterized protein from Mycobacterium tuberculosis (strain CDC 1551 / Oshkosh).